A 465-amino-acid polypeptide reads, in one-letter code: Deoxyguanosinetriphosphate triphosphohydrolase-like protein (465 aa).

Positions 1-22 (MKWDKLLNDKRRRESGVTRSKN) are disordered. The 190-residue stretch at 63–252 (RLTHSMEVST…LEVADDIAYL (190 aa)) folds into the HD domain.

The protein belongs to the dGTPase family. Type 3 subfamily.

The chain is Deoxyguanosinetriphosphate triphosphohydrolase-like protein from Listeria innocua serovar 6a (strain ATCC BAA-680 / CLIP 11262).